The sequence spans 217 residues: Photosynthetic NDH subunit of lumenal location 4, chloroplastic (217 aa).

Residues 1–34 (MAISTLTLTQSLYTRSFRPTIFFSSSSSSSFSCL) constitute a chloroplast transit peptide. Disulfide bonds link Cys-87–Cys-99 and Cys-188–Cys-193. The region spanning 112-211 (GVLVNIHYTA…LYDINFVEIY (100 aa)) is the PPIase FKBP-type domain.

This sequence belongs to the FKBP-type PPIase family. In terms of assembly, part of the chloroplast NDH complex, composed of a mixture of chloroplast and nucleus encoded subunits. Component of the NDH lumenal subcomplex, at least composed of PnsL1, PnsL2, PnsL3, PnsL4 and PnsL5.

The protein localises to the plastid. It localises to the chloroplast thylakoid lumen. The enzyme catalyses [protein]-peptidylproline (omega=180) = [protein]-peptidylproline (omega=0). Functionally, NDH shuttles electrons from NAD(P)H:plastoquinone, via FMN and iron-sulfur (Fe-S) centers, to quinones in the photosynthetic chain and possibly in a chloroplast respiratory chain. The immediate electron acceptor for the enzyme in this species is believed to be plastoquinone. Couples the redox reaction to proton translocation, and thus conserves the redox energy in a proton gradient. PPIases accelerate the folding of proteins. It catalyzes the cis-trans isomerization of proline imidic peptide bonds in oligopeptides. Seems to be essential for stabilizing the NDH subcomplex A. The polypeptide is Photosynthetic NDH subunit of lumenal location 4, chloroplastic (Arabidopsis thaliana (Mouse-ear cress)).